The primary structure comprises 497 residues: Ethanolamine-phosphate phospho-lyase (497 aa).

Residue K278 is modified to N6-(pyridoxal phosphate)lysine. The segment at 440–497 (TGAETESGISKNTPCRTKMPKEAQSELLRDSSLESRENPSQKRNGLCTDSLLSKRLRT) is disordered. The span at 458 to 479 (MPKEAQSELLRDSSLESRENPS) shows a compositional bias: basic and acidic residues.

The protein belongs to the class-III pyridoxal-phosphate-dependent aminotransferase family. In terms of assembly, homotetramer. Pyridoxal 5'-phosphate serves as cofactor.

The protein resides in the mitochondrion. It carries out the reaction phosphoethanolamine + H2O = acetaldehyde + NH4(+) + phosphate. Functionally, catalyzes the pyridoxal-phosphate-dependent breakdown of phosphoethanolamine, converting it to ammonia, inorganic phosphate and acetaldehyde. This Bos taurus (Bovine) protein is Ethanolamine-phosphate phospho-lyase (ETNPPL).